The sequence spans 366 residues: Ribosomal RNA large subunit methyltransferase M (366 aa).

S-adenosyl-L-methionine is bound by residues serine 188, 221 to 224 (CPGG), aspartate 240, aspartate 260, and aspartate 277. Catalysis depends on lysine 306, which acts as the Proton acceptor.

This sequence belongs to the class I-like SAM-binding methyltransferase superfamily. RNA methyltransferase RlmE family. RlmM subfamily. As to quaternary structure, monomer.

Its subcellular location is the cytoplasm. It catalyses the reaction cytidine(2498) in 23S rRNA + S-adenosyl-L-methionine = 2'-O-methylcytidine(2498) in 23S rRNA + S-adenosyl-L-homocysteine + H(+). Catalyzes the 2'-O-methylation at nucleotide C2498 in 23S rRNA. The sequence is that of Ribosomal RNA large subunit methyltransferase M from Escherichia fergusonii (strain ATCC 35469 / DSM 13698 / CCUG 18766 / IAM 14443 / JCM 21226 / LMG 7866 / NBRC 102419 / NCTC 12128 / CDC 0568-73).